The sequence spans 78 residues: Calcium/calmodulin-dependent protein kinase II inhibitor 1 (78 aa).

The tract at residues 41–68 (NKRPPKLGQIGRSKRVVIEDDRIDDVLK) is CAMK2 inhibitory domain.

This sequence belongs to the CAMK2N family. Interacts with CAMK2B; the presence of Ca(2+)/calmodulin increases the interaction but is not essential. Interacts with CAMK2A; this interaction requires CAMK2A activation by Ca(2+).

It localises to the synapse. It is found in the cell projection. Its subcellular location is the dendrite. The protein resides in the postsynaptic density. In terms of biological role, potent and specific inhibitor of CaM-kinase II (CAMK2). Plays a role in the maintenance of long-term retrieval-induced memory in response to contextual fear. Modulates blood pressure and vascular reactivity via regulation of CAMK2 activity in addition to regulation of left ventricular mass. Mediates the NLRP3 inflammasome in cardiomyocytes via acting as an inhibitor of the MAPK14/p38 and MAPK8/JNK pathways, thereby regulating ventricular remodeling and cardiac rhythm post-myocardial infarction. Negatively effects insulin sensitivity and promotes lipid formation in adipose tissues independent of CAMK2 signaling. The chain is Calcium/calmodulin-dependent protein kinase II inhibitor 1 (CAMK2N1) from Homo sapiens (Human).